The primary structure comprises 116 residues: Ribonuclease P protein component (116 aa).

It belongs to the RnpA family. As to quaternary structure, consists of a catalytic RNA component (M1 or rnpB) and a protein subunit.

The catalysed reaction is Endonucleolytic cleavage of RNA, removing 5'-extranucleotides from tRNA precursor.. RNaseP catalyzes the removal of the 5'-leader sequence from pre-tRNA to produce the mature 5'-terminus. It can also cleave other RNA substrates such as 4.5S RNA. The protein component plays an auxiliary but essential role in vivo by binding to the 5'-leader sequence and broadening the substrate specificity of the ribozyme. This is Ribonuclease P protein component from Leuconostoc mesenteroides subsp. mesenteroides (strain ATCC 8293 / DSM 20343 / BCRC 11652 / CCM 1803 / JCM 6124 / NCDO 523 / NBRC 100496 / NCIMB 8023 / NCTC 12954 / NRRL B-1118 / 37Y).